The following is a 265-amino-acid chain: Hydroxyethylthiazole kinase (265 aa).

Position 50 (methionine 50) interacts with substrate. Residues arginine 125 and threonine 171 each coordinate ATP. Glycine 198 is a substrate binding site.

The protein belongs to the Thz kinase family. Mg(2+) is required as a cofactor.

It carries out the reaction 5-(2-hydroxyethyl)-4-methylthiazole + ATP = 4-methyl-5-(2-phosphooxyethyl)-thiazole + ADP + H(+). It functions in the pathway cofactor biosynthesis; thiamine diphosphate biosynthesis; 4-methyl-5-(2-phosphoethyl)-thiazole from 5-(2-hydroxyethyl)-4-methylthiazole: step 1/1. Catalyzes the phosphorylation of the hydroxyl group of 4-methyl-5-beta-hydroxyethylthiazole (THZ). The protein is Hydroxyethylthiazole kinase of Salmonella typhimurium (strain LT2 / SGSC1412 / ATCC 700720).